Reading from the N-terminus, the 284-residue chain is 2-dehydro-3-deoxyphosphooctonate aldolase (284 aa).

Belongs to the KdsA family.

Its subcellular location is the cytoplasm. It carries out the reaction D-arabinose 5-phosphate + phosphoenolpyruvate + H2O = 3-deoxy-alpha-D-manno-2-octulosonate-8-phosphate + phosphate. Its pathway is carbohydrate biosynthesis; 3-deoxy-D-manno-octulosonate biosynthesis; 3-deoxy-D-manno-octulosonate from D-ribulose 5-phosphate: step 2/3. The protein operates within bacterial outer membrane biogenesis; lipopolysaccharide biosynthesis. This Enterobacter sp. (strain 638) protein is 2-dehydro-3-deoxyphosphooctonate aldolase.